The sequence spans 258 residues: MLILISPAKTLDYQSPLTTTRYTLPELLDNAQQLIHEARKLTPPQISSLMRISDKLAGINAARFHDWQPDFTPENARQAILAFKGDVYTGLQAETFSEDDFDFAQQHLRMLSGLYGVLRPLDLMQPYRLEMGIRLENARGKDLYQFWGDIITNKLNEALAAQGDNVVINLASDEYFKSVKPKKLNAEIIKPVFLDEKNGKFKIISFYAKKARGLMSRFIIENRLTKPEQLTGFNSEGYFFDEASSSNGELVFKRYEQR.

The protein belongs to the UPF0246 family.

The protein is UPF0246 protein YaaA of Escherichia coli O127:H6 (strain E2348/69 / EPEC).